The following is a 234-amino-acid chain: Sugar fermentation stimulation protein homolog (234 aa).

This sequence belongs to the SfsA family.

This is Sugar fermentation stimulation protein homolog from Shewanella piezotolerans (strain WP3 / JCM 13877).